We begin with the raw amino-acid sequence, 339 residues long: Dihydroorotate dehydrogenase (quinone) (339 aa).

FMN contacts are provided by residues 62–66 (AGLDK) and T86. Residue K66 coordinates substrate. Residue 111–115 (NRMGF) coordinates substrate. 2 residues coordinate FMN: N139 and N172. Substrate is bound at residue N172. S175 serves as the catalytic Nucleophile. N177 is a binding site for substrate. Residues K217 and T245 each contribute to the FMN site. 246–247 (NT) contacts substrate. FMN contacts are provided by residues G268, G297, and 318–319 (YS).

Belongs to the dihydroorotate dehydrogenase family. Type 2 subfamily. As to quaternary structure, monomer. Requires FMN as cofactor.

The protein localises to the cell membrane. The catalysed reaction is (S)-dihydroorotate + a quinone = orotate + a quinol. Its pathway is pyrimidine metabolism; UMP biosynthesis via de novo pathway; orotate from (S)-dihydroorotate (quinone route): step 1/1. Its function is as follows. Catalyzes the conversion of dihydroorotate to orotate with quinone as electron acceptor. The protein is Dihydroorotate dehydrogenase (quinone) of Shewanella amazonensis (strain ATCC BAA-1098 / SB2B).